The chain runs to 351 residues: MKNKKRVLIASSLSCAILLLSAATTQANSAHKDSQDQNKKEHVDKSQQKDKRNVTNKDKNSTVPDDIGKNGKITKRTETVYDEKTNILQNLQFDFIDDPTYDKNVLLVKKQGSIHSNLKFESHKEEKNSNWLKYPSEYHVDFQVKRNRKTEILDQLPKNKISTAKVDSTFSYSSGGKFDSTKGIGRTSSNSYSKTISYNQQNYDTIASGKNNNWHVHWSVIANDLKYGGEVKNRNDELLFYRNTRIATVENPELSFASKYRYPALVRSGFNPEFLTYLSNEKSNEKTQFEVTYTRNQDILKNRPGIHYAPPILEKNKDGQRLIVTYEVDWKNKTVKVVDKYSDDNKPYKEG.

A signal peptide spans 1–27 (MKNKKRVLIASSLSCAILLLSAATTQA). The segment at 28 to 71 (NSAHKDSQDQNKKEHVDKSQQKDKRNVTNKDKNSTVPDDIGKNG) is disordered. Residues 30-60 (AHKDSQDQNKKEHVDKSQQKDKRNVTNKDKN) show a composition bias toward basic and acidic residues.

It belongs to the aerolysin family.

This is an uncharacterized protein from Staphylococcus aureus (strain N315).